Consider the following 297-residue polypeptide: Small ribosomal subunit biogenesis GTPase RsgA (297 aa).

The region spanning 65-223 (RNELVRPPVA…VADTPGFSAI (159 aa)) is the CP-type G domain. Residues 114-117 (TKVD) and 166-174 (GQSGAGKST) each bind GTP. The Zn(2+) site is built by cysteine 247, cysteine 252, histidine 254, and cysteine 260.

Belongs to the TRAFAC class YlqF/YawG GTPase family. RsgA subfamily. Monomer. Associates with 30S ribosomal subunit, binds 16S rRNA. It depends on Zn(2+) as a cofactor.

It is found in the cytoplasm. Functionally, one of several proteins that assist in the late maturation steps of the functional core of the 30S ribosomal subunit. Helps release RbfA from mature subunits. May play a role in the assembly of ribosomal proteins into the subunit. Circularly permuted GTPase that catalyzes slow GTP hydrolysis, GTPase activity is stimulated by the 30S ribosomal subunit. In Enterococcus faecalis (strain ATCC 700802 / V583), this protein is Small ribosomal subunit biogenesis GTPase RsgA.